Consider the following 375-residue polypeptide: Erythronate-4-phosphate dehydrogenase (375 aa).

The substrate site is built by S45 and T67. Residue D147 coordinates NAD(+). R209 is an active-site residue. D233 contributes to the NAD(+) binding site. E238 is an active-site residue. H255 (proton donor) is an active-site residue. An NAD(+)-binding site is contributed by G258. Residue Y259 participates in substrate binding.

This sequence belongs to the D-isomer specific 2-hydroxyacid dehydrogenase family. PdxB subfamily. As to quaternary structure, homodimer.

It localises to the cytoplasm. It carries out the reaction 4-phospho-D-erythronate + NAD(+) = (R)-3-hydroxy-2-oxo-4-phosphooxybutanoate + NADH + H(+). The protein operates within cofactor biosynthesis; pyridoxine 5'-phosphate biosynthesis; pyridoxine 5'-phosphate from D-erythrose 4-phosphate: step 2/5. In terms of biological role, catalyzes the oxidation of erythronate-4-phosphate to 3-hydroxy-2-oxo-4-phosphonooxybutanoate. The polypeptide is Erythronate-4-phosphate dehydrogenase (Shewanella amazonensis (strain ATCC BAA-1098 / SB2B)).